Reading from the N-terminus, the 288-residue chain is Polyamine aminopropyltransferase (288 aa).

The PABS domain maps to 9-238 (ETLHDQFGQY…GIMTFAWATD (230 aa)). Glutamine 33 contributes to the S-methyl-5'-thioadenosine binding site. Positions 64 and 88 each coordinate spermidine. Residues glutamate 108 and 140–141 (DG) each bind S-methyl-5'-thioadenosine. Aspartate 158 acts as the Proton acceptor in catalysis. A spermidine-binding site is contributed by 158-161 (DCTD). Proline 165 lines the S-methyl-5'-thioadenosine pocket.

The protein belongs to the spermidine/spermine synthase family. As to quaternary structure, homodimer or homotetramer.

It localises to the cytoplasm. It catalyses the reaction S-adenosyl 3-(methylsulfanyl)propylamine + putrescine = S-methyl-5'-thioadenosine + spermidine + H(+). It participates in amine and polyamine biosynthesis; spermidine biosynthesis; spermidine from putrescine: step 1/1. In terms of biological role, catalyzes the irreversible transfer of a propylamine group from the amino donor S-adenosylmethioninamine (decarboxy-AdoMet) to putrescine (1,4-diaminobutane) to yield spermidine. The chain is Polyamine aminopropyltransferase from Escherichia fergusonii (strain ATCC 35469 / DSM 13698 / CCUG 18766 / IAM 14443 / JCM 21226 / LMG 7866 / NBRC 102419 / NCTC 12128 / CDC 0568-73).